We begin with the raw amino-acid sequence, 1148 residues long: Alpha-mannosidase 2 (1148 aa).

The Cytoplasmic portion of the chain corresponds to 1 to 5; it reads MKLSR. Residues 6-26 traverse the membrane as a helical; Signal-anchor for type II membrane protein segment; that stretch reads QFTVFGSAIFCVVIFSLYLML. Over 27-1148 the chain is Lumenal; sequence DRGHLDYPRG…EISTSRIRLR (1122 aa). Phosphoserine is present on residues Ser-80 and Ser-82. The N-linked (GlcNAc...) asparagine glycan is linked to Asn-93. Zn(2+) contacts are provided by His-174, Asp-176, Asp-288, and His-568. Asp-288 acts as the Nucleophile in catalysis. Residues 1121-1148 form a disordered region; sequence MHSPPDAQNTSEVSLSPMEISTSRIRLR.

This sequence belongs to the glycosyl hydrolase 38 family. In terms of assembly, homodimer; disulfide-linked. Zn(2+) serves as cofactor. In terms of processing, glycosylated. As to expression, liver.

It localises to the golgi apparatus membrane. It catalyses the reaction N(4)-{beta-D-GlcNAc-(1-&gt;2)-alpha-D-Man-(1-&gt;3)-[alpha-D-Man-(1-&gt;3)-[alpha-D-Man-(1-&gt;6)]-alpha-D-Man-(1-&gt;6)]-beta-D-Man-(1-&gt;4)-beta-D-GlcNAc-(1-&gt;4)-beta-D-GlcNAc}-L-asparaginyl-[protein] + 2 H2O = 2 alpha-D-mannopyranose + an N(4)-{beta-D-GlcNAc-(1-&gt;2)-alpha-D-Man-(1-&gt;3)-[alpha-D-Man-(1-&gt;6)]-beta-D-Man-(1-&gt;4)-beta-D-GlcNAc-(1-&gt;4)-beta-D-GlcNAc}-L-asparaginyl-[protein]. Its pathway is protein modification; protein glycosylation. Its activity is regulated as follows. Inhibited by swainsonine. Its function is as follows. Catalyzes the first committed step in the biosynthesis of complex N-glycans. It controls conversion of high mannose to complex N-glycans; the final hydrolytic step in the N-glycan maturation pathway. This chain is Alpha-mannosidase 2 (Man2a1), found in Rattus norvegicus (Rat).